The sequence spans 203 residues: Glutathione-specific gamma-glutamylcyclotransferase (203 aa).

Substrate is bound at residue 12-17 (VFGYGS). Glu105 functions as the Proton acceptor in the catalytic mechanism.

The protein belongs to the gamma-glutamylcyclotransferase family. ChaC subfamily.

It is found in the cytoplasm. Its subcellular location is the nucleus. The enzyme catalyses glutathione = L-cysteinylglycine + 5-oxo-L-proline. In terms of biological role, gamma-glutamylcyclotransferase acting specifically on glutathione, but not on other gamma-glutamyl peptides. Allows utilization of gluthathione through subsequent cleavage of the Cys-Gly dipeptide by Cys-Gly metallodipeptidase dug1. In Schizosaccharomyces pombe (strain 972 / ATCC 24843) (Fission yeast), this protein is Glutathione-specific gamma-glutamylcyclotransferase.